The sequence spans 319 residues: Annexin A4 (319 aa).

Ala-2 carries the post-translational modification N-acetylalanine. Position 7 is a phosphothreonine (Thr-7). Ser-12 carries the phosphoserine modification. Annexin repeat units lie at residues 14–85, 86–157, 169–241, and 245–316; these read FNAA…GMMT, PTVL…SLSA, ALMR…AIVK, and NKSA…ILCG. Residues Lys-213, Lys-293, and Lys-300 each carry the N6-acetyllysine modification.

This sequence belongs to the annexin family. As to quaternary structure, monomer. Binds to SFTPA1 in a Ca(2+)-dependent manner.

Its subcellular location is the zymogen granule membrane. In terms of biological role, may play a role in alveolar type II cells through interaction with the surfactant protein SFTPA1 (SP-A). The protein is Annexin A4 (ANXA4) of Bos taurus (Bovine).